Here is a 455-residue protein sequence, read N- to C-terminus: Probable circularly permuted 1,3-beta-glucanase TOS1 (455 aa).

The signal sequence occupies residues 1-23 (MLQKLSMTALVGLFSSVVSLVNA). The tract at residues 158 to 221 (TADSTNTVVG…SSSSSSNTNG (64 aa)) is disordered. Residues 172 to 189 (SSYTKDSTVLSSSAQAVE) show a composition bias toward polar residues. Residues 190–219 (TSESQSSISSSKTTSSAAAASSSSSSSSNT) show a composition bias toward low complexity. Residue Asn-236 is glycosylated (N-linked (GlcNAc...) asparagine). The ExDxxE motif signature appears at 372–377 (EMDLFE). An N-linked (GlcNAc...) asparagine glycan is attached at Asn-417.

This sequence belongs to the PGA52 family.

It is found in the secreted. It localises to the cell wall. It carries out the reaction Hydrolysis of (1-&gt;3)-beta-D-glucosidic linkages in (1-&gt;3)-beta-D-glucans.. Probable circularly permuted 1,3-beta-glucanase involved in cell wall modification through beta-1,3-glucan network alterations such as increased branching or remodeling. This Saccharomyces cerevisiae (strain ATCC 204508 / S288c) (Baker's yeast) protein is Probable circularly permuted 1,3-beta-glucanase TOS1.